Here is a 188-residue protein sequence, read N- to C-terminus: GMP synthase [glutamine-hydrolyzing] subunit A (188 aa).

The 187-residue stretch at 2-188 (KIAVIYFGGQ…FKNFIEACKK (187 aa)) folds into the Glutamine amidotransferase type-1 domain. Residue Cys-79 is the Nucleophile of the active site. Active-site residues include His-166 and Glu-168.

Heterodimer composed of a glutamine amidotransferase subunit (A) and a GMP-binding subunit (B).

It catalyses the reaction XMP + L-glutamine + ATP + H2O = GMP + L-glutamate + AMP + diphosphate + 2 H(+). The protein operates within purine metabolism; GMP biosynthesis; GMP from XMP (L-Gln route): step 1/1. Functionally, catalyzes the synthesis of GMP from XMP. This is GMP synthase [glutamine-hydrolyzing] subunit A from Sulfurisphaera tokodaii (strain DSM 16993 / JCM 10545 / NBRC 100140 / 7) (Sulfolobus tokodaii).